Here is a 90-residue protein sequence, read N- to C-terminus: Probable Fe(2+)-trafficking protein (90 aa).

The protein belongs to the Fe(2+)-trafficking protein family.

Functionally, could be a mediator in iron transactions between iron acquisition and iron-requiring processes, such as synthesis and/or repair of Fe-S clusters in biosynthetic enzymes. The chain is Probable Fe(2+)-trafficking protein from Cupriavidus necator (strain ATCC 17699 / DSM 428 / KCTC 22496 / NCIMB 10442 / H16 / Stanier 337) (Ralstonia eutropha).